Consider the following 408-residue polypeptide: Protein ZNF365 (408 aa).

Serine 16 carries the phosphoserine modification. The segment at 26–51 adopts a C2H2-type; degenerate zinc-finger fold; that stretch reads FRCPRCGDHTRFRSLSSLRAHLEFSH. A phosphoserine mark is found at serine 139 and serine 146. A coiled-coil region spans residues 170–298; that stretch reads VEAVDRTIEK…QLEYYQSQQA (129 aa). Threonine 176 carries the post-translational modification Phosphothreonine. A Phosphoserine modification is found at serine 370.

Homodimers. Interacts with NDE1 and NDEL1. Interacts with DISC1. Interacts with PARP1. Interacts with MCRS1. Expressed in cerebral cortex, hippocampus, olfactory tubercle and striatum.

It is found in the cytoplasm. The protein localises to the cytoskeleton. Its subcellular location is the microtubule organizing center. The protein resides in the centrosome. In terms of biological role, involved in the positive regulation of oligodendrocyte differentiation during postnatal growth. Involved in the morphogenesis of basket cells in the somatosensory cortex during embryogenesis. Involved in dendritic arborization, morphogenesis of spine density dendrite, and establishment of postsynaptic dendrite density in cortical pyramidal neurons. Involved in the regulation of neurogenesis. Negatively regulates neurite outgrowth. Involved in homologous recombination (HR) repair pathway. Required for proper resolution of DNA double-strand breaks (DSBs) by HR. Is required for recovery of stalled replication forks, and directly contributes to genomic stability. Interacts with PARP1 and mediates MRE11-dependent DNA end resection during replication fork recovery. Contributes to genomic stability by preventing telomere dysfunction. This Rattus norvegicus (Rat) protein is Protein ZNF365 (Znf365).